The primary structure comprises 260 residues: MVLVRVLANLLMLQLSYAQKSSELIIGGDECNINEHRFLVALYTFRSRRFHCSGTLINEEWVLSAARCDRKNIRIQLGMHSTNVINEDVQTRVPKEKFFCLSSKTYTKWNKDIMLIRLKKPVNNSTHIAPVSLPSNPPSLGSVCRVMGWGTISATKETHPDVPYCANINILDYSVCRAAYARLPATSRTLCAGILEGGKDSCLTDSGGPLICNGQFQGIVSWGGHPCGQPRKPGLYTKVFDHLDWIKSIIAGNKDATCPP.

A signal peptide spans 1-18 (MVLVRVLANLLMLQLSYA). Positions 19–24 (QKSSEL) are excised as a propeptide. The Peptidase S1 domain occupies 25 to 251 (IIGGDECNIN…HLDWIKSIIA (227 aa)). Intrachain disulfides connect C31-C165, C52-C68, C100-C258, C144-C212, C176-C191, and C202-C227. D112 functions as the Charge relay system in the catalytic mechanism. Residues N123 and N124 are each glycosylated (N-linked (GlcNAc...) asparagine). Catalysis depends on S206, which acts as the Charge relay system.

Belongs to the peptidase S1 family. Snake venom subfamily. As to expression, expressed by the venom gland.

It is found in the secreted. In terms of biological role, snake venom serine protease homolog. May act in the hemostasis system of the prey. This is Snake venom serine protease homolog from Protobothrops jerdonii (Jerdon's pitviper).